Here is a 405-residue protein sequence, read N- to C-terminus: MAGVLGMILAGGEGSRLRPLTESRTKPAVPFGGSYRLIDFALNNFVNADLMRIYVLTQFKSQSLFQHMKKGWNVNGITDRFIDPVPAQMRTGKRWYEGTADAIYQNISFIESTDPEHVCIFGSDHIYKMDIRQMLDFHKKKKAALTVSALRMPAKDASGFGVIEVDEHGKMIGFEEKPSNPKCIPGQPGIALVSMGNYIFEAESLCKELIHDAALEDSSHDFGKDIIPKMFPEGNVYVYDFSTNHIKGEKKEVYWRDVGTIESYWEAHMDLLKKDAPFSLYNRKWPLHTYYPPLPPATFSDSDNGRVQIIDSLVCGGSYIRGSRIEKSVLGFRSNIASACDISESILLGNVKVGKGCVLRRVIVDKGADIAPGTEIGVNLQEDKKRYHVSDEGIVVIPKGERVGY.

Residues Y96, G161, 176–177, and S194 each bind alpha-D-glucose 1-phosphate; that span reads EK.

Belongs to the bacterial/plant glucose-1-phosphate adenylyltransferase family. Homotetramer.

It catalyses the reaction alpha-D-glucose 1-phosphate + ATP + H(+) = ADP-alpha-D-glucose + diphosphate. It functions in the pathway glycan biosynthesis; glycogen biosynthesis. Its function is as follows. Involved in the biosynthesis of ADP-glucose, a building block required for the elongation reactions to produce glycogen. Catalyzes the reaction between ATP and alpha-D-glucose 1-phosphate (G1P) to produce pyrophosphate and ADP-Glc. This is Glucose-1-phosphate adenylyltransferase from Aliivibrio fischeri (strain ATCC 700601 / ES114) (Vibrio fischeri).